Reading from the N-terminus, the 383-residue chain is D-alanine--D-alanine ligase (383 aa).

The region spanning 164–373 is the ATP-grasp domain; sequence KLAFQAAGLE…YSALIDELIT (210 aa). 196 to 251 provides a ligand contact to ATP; the sequence is VAELGFPVFVKPARAGSSFGITRVDEPSQLDAAIATAREHDLKLVVEAGIDGREIE. Mg(2+) contacts are provided by Asp327, Glu340, and Asn342.

It belongs to the D-alanine--D-alanine ligase family. It depends on Mg(2+) as a cofactor. The cofactor is Mn(2+).

It is found in the cytoplasm. It catalyses the reaction 2 D-alanine + ATP = D-alanyl-D-alanine + ADP + phosphate + H(+). The protein operates within cell wall biogenesis; peptidoglycan biosynthesis. Its function is as follows. Cell wall formation. This Kocuria rhizophila (strain ATCC 9341 / DSM 348 / NBRC 103217 / DC2201) protein is D-alanine--D-alanine ligase.